Consider the following 624-residue polypeptide: ATP-dependent RNA helicase MRH4, mitochondrial (624 aa).

Residues 1 to 43 (MSPVASTCLLCEMRTVVWGWQPAVPQPWHFVRFASSARLARRK) constitute a mitochondrion transit peptide. The segment at 41-120 (RRKPARMALS…KDAADKKQDG (80 aa)) is disordered. Basic and acidic residues predominate over residues 86 to 119 (RLPDRPIPRSDAELKRSSSDLNNKEKDAADKKQD). The Q motif motif lies at 151–184 (TSFDQFPLLPQVREAVYANAFPTLTEISPTPIQR). A Helicase ATP-binding domain is found at 212–427 (EEELFHFDQF…EKKFPEMKRL (216 aa)). An ATP-binding site is contributed by 225-232 (AETGTGKT). A DEAD box motif is present at residues 374–377 (DEAD). Residues 438–624 (RVQLGVVDVD…EAMFRGQALI (187 aa)) enclose the Helicase C-terminal domain.

The protein belongs to the DEAD box helicase family. MRH4 subfamily.

The protein resides in the mitochondrion. It carries out the reaction ATP + H2O = ADP + phosphate + H(+). Functionally, ATP-binding RNA helicase involved in mitochondrial RNA metabolism. Required for maintenance of mitochondrial DNA. This chain is ATP-dependent RNA helicase MRH4, mitochondrial (MRH4), found in Ajellomyces capsulatus (strain NAm1 / WU24) (Darling's disease fungus).